Consider the following 519-residue polypeptide: Sodium-dependent dicarboxylate transporter SdcS (519 aa).

14 helical membrane passes run 29–49 (VGQL…LLLF), 59–79 (VFVL…AIPI), 103–123 (AQYG…AIAM), 136–156 (IINT…IATG), 159–179 (SMFV…LAII), 201–221 (ALVL…LIGT), 241–261 (FAKW…LVWI), 297–317 (KVVL…EFLL), 322–342 (FTSE…LFLI), 362–382 (LPWG…GISE), 395–415 (LIEG…VLFL), 428–448 (ILPI…LLMV), 451–471 (AMAA…AIVF), and 490–510 (LLSI…VLGI).

The protein belongs to the SLC13A/DASS transporter (TC 2.A.47) family. NADC subfamily.

It is found in the cell membrane. Mediates the transport of dicarboxylates across the cytoplasmic membrane via a Na(+)-electrochemical gradient. The protein is Sodium-dependent dicarboxylate transporter SdcS (sdcS) of Staphylococcus saprophyticus subsp. saprophyticus (strain ATCC 15305 / DSM 20229 / NCIMB 8711 / NCTC 7292 / S-41).